We begin with the raw amino-acid sequence, 214 residues long: Probable nicotinate-nucleotide adenylyltransferase (214 aa).

The protein belongs to the NadD family.

It catalyses the reaction nicotinate beta-D-ribonucleotide + ATP + H(+) = deamido-NAD(+) + diphosphate. It functions in the pathway cofactor biosynthesis; NAD(+) biosynthesis; deamido-NAD(+) from nicotinate D-ribonucleotide: step 1/1. Its function is as follows. Catalyzes the reversible adenylation of nicotinate mononucleotide (NaMN) to nicotinic acid adenine dinucleotide (NaAD). The protein is Probable nicotinate-nucleotide adenylyltransferase of Rubrobacter xylanophilus (strain DSM 9941 / JCM 11954 / NBRC 16129 / PRD-1).